Consider the following 293-residue polypeptide: Methylsterol monooxygenase 1 (293 aa).

The next 2 helical transmembrane spans lie at 55–75 (LIVHETIYFLFSLPGFLFQFI) and 100–120 (GILFNHFFIQLPLICGTYYFT). In terms of domain architecture, Fatty acid hydroxylase spans 144–274 (GCAVIEDTWH…FTWWDRIFGT (131 aa)). The Histidine box-1 motif lies at 157-161 (HRLLH). A Histidine box-2 motif is present at residues 170-174 (HKVHH). The chain crosses the membrane as a helical span at residues 199-219 (FFIGIVLLCDHVILLWAWVTM). The short motif at 249-255 (HHDFHHM) is the Histidine box-3 element.

The protein belongs to the sterol desaturase family. Fe cation serves as cofactor. In terms of processing, ubiquitinated by MARCHF6, leading to proteasomal degradation.

It localises to the endoplasmic reticulum membrane. It catalyses the reaction 4,4-dimethyl-5alpha-cholest-7-en-3beta-ol + 6 Fe(II)-[cytochrome b5] + 3 O2 + 5 H(+) = 4alpha-carboxy-4beta-methyl-5alpha-cholest-7-ene-3beta-ol + 6 Fe(III)-[cytochrome b5] + 4 H2O. The enzyme catalyses 4,4-dimethyl-5alpha-cholesta-8,24-dien-3beta-ol + 6 Fe(II)-[cytochrome b5] + 3 O2 + 5 H(+) = 4beta-methylzymosterol-4alpha-carboxylate + 6 Fe(III)-[cytochrome b5] + 4 H2O. The catalysed reaction is 4alpha-methylzymosterol + 6 Fe(II)-[cytochrome b5] + 3 O2 + 5 H(+) = 4alpha-carboxyzymosterol + 6 Fe(III)-[cytochrome b5] + 4 H2O. It carries out the reaction 4alpha-methyl-5alpha-cholest-7-en-3beta-ol + 6 Fe(II)-[cytochrome b5] + 3 O2 + 5 H(+) = 4alpha-carboxy-5alpha-cholest-7-en-3beta-ol + 6 Fe(III)-[cytochrome b5] + 4 H2O. It catalyses the reaction 4,4-dimethyl-5alpha-cholest-8-en-3beta-ol + 6 Fe(II)-[cytochrome b5] + 3 O2 + 5 H(+) = 4alpha-carboxy-4beta-methyl-5alpha-cholest-8-en-3beta-ol + 6 Fe(III)-[cytochrome b5] + 4 H2O. The enzyme catalyses 4alpha-methyl-5alpha-cholest-8-en-3beta-ol + 6 Fe(II)-[cytochrome b5] + 3 O2 + 5 H(+) = 4alpha-carboxy-5alpha-cholest-8-ene-3beta-ol + 6 Fe(III)-[cytochrome b5] + 4 H2O. Its pathway is steroid biosynthesis; zymosterol biosynthesis; zymosterol from lanosterol: step 3/6. It functions in the pathway steroid biosynthesis; cholesterol biosynthesis. Its function is as follows. Catalyzes the three-step monooxygenation required for the demethylation of 4,4-dimethyl and 4alpha-methylsterols, which can be subsequently metabolized to cholesterol. The polypeptide is Methylsterol monooxygenase 1 (Msmo1) (Rattus norvegicus (Rat)).